The sequence spans 216 residues: Ras-related protein Rab11C (216 aa).

Residue 19–26 coordinates GTP; that stretch reads GDSGVGKS. The Effector region motif lies at 41–49; the sequence is SKSTIGVEF. Residues 67 to 71 and 125 to 128 contribute to the GTP site; these read DTAGQ and NKSD. S-geranylgeranyl cysteine attachment occurs at residues Cys-213 and Cys-214.

The protein belongs to the small GTPase superfamily. Rab family.

It localises to the cell membrane. The chain is Ras-related protein Rab11C (RAB11C) from Lotus japonicus (Lotus corniculatus var. japonicus).